The chain runs to 260 residues: Ubiquinone/menaquinone biosynthesis C-methyltransferase UbiE (260 aa).

S-adenosyl-L-methionine contacts are provided by residues T83, D104, and N132–A133.

The protein belongs to the class I-like SAM-binding methyltransferase superfamily. MenG/UbiE family.

The catalysed reaction is a 2-demethylmenaquinol + S-adenosyl-L-methionine = a menaquinol + S-adenosyl-L-homocysteine + H(+). The enzyme catalyses a 2-methoxy-6-(all-trans-polyprenyl)benzene-1,4-diol + S-adenosyl-L-methionine = a 5-methoxy-2-methyl-3-(all-trans-polyprenyl)benzene-1,4-diol + S-adenosyl-L-homocysteine + H(+). It functions in the pathway quinol/quinone metabolism; menaquinone biosynthesis; menaquinol from 1,4-dihydroxy-2-naphthoate: step 2/2. Its pathway is cofactor biosynthesis; ubiquinone biosynthesis. Methyltransferase required for the conversion of demethylmenaquinol (DMKH2) to menaquinol (MKH2) and the conversion of 2-polyprenyl-6-methoxy-1,4-benzoquinol (DDMQH2) to 2-polyprenyl-3-methyl-6-methoxy-1,4-benzoquinol (DMQH2). This Bartonella tribocorum (strain CIP 105476 / IBS 506) protein is Ubiquinone/menaquinone biosynthesis C-methyltransferase UbiE.